The primary structure comprises 78 residues: U7-lycotoxin-Ls1h (78 aa).

The N-terminal stretch at 1 to 22 is a signal peptide; that stretch reads MKLIIFTGLTLLLIVSLIDVEA. The propeptide occupies 23–26; it reads QNEG.

Belongs to the neurotoxin 19 (CSTX) family. 07 (U7-Lctx) subfamily. Contains 4 disulfide bonds. Expressed by the venom gland.

It localises to the secreted. The polypeptide is U7-lycotoxin-Ls1h (Lycosa singoriensis (Wolf spider)).